We begin with the raw amino-acid sequence, 710 residues long: Subtilisin-like protease SBT4.8 (710 aa).

An N-terminal signal peptide occupies residues 1-23 (MVKRASFCLLSCLIILFLSSVSA). A propeptide spans 24-111 (IIYDPQDKQV…VFRSKNYKLQ (88 aa)) (activation peptide). In terms of domain architecture, Inhibitor I9 spans 33 to 110 (VYVVYMGSLP…SVFRSKNYKL (78 aa)). One can recognise a Peptidase S8 domain in the interval 115 to 559 (SWDFMGMKEG…AGHVDPIAAI (445 aa)). Asp-143 (charge relay system) is an active-site residue. N-linked (GlcNAc...) asparagine glycosylation is present at Asn-174. The active-site Charge relay system is His-198. N-linked (GlcNAc...) asparagine glycans are attached at residues Asn-221, Asn-364, and Asn-419. One can recognise a PA domain in the interval 354–414 (KYPLEYGDYL…VLSQDDFDSL (61 aa)). The active-site Charge relay system is the Ser-498. N-linked (GlcNAc...) asparagine glycans are attached at residues Asn-535, Asn-568, Asn-580, Asn-618, and Asn-636.

It belongs to the peptidase S8 family. The C-terminal propeptide is autocleaved.

The protein resides in the secreted. The polypeptide is Subtilisin-like protease SBT4.8 (Arabidopsis thaliana (Mouse-ear cress)).